The primary structure comprises 257 residues: Snake venom serine protease BITS01A (257 aa).

An N-terminal signal peptide occupies residues 1 to 18 (MVLIRVIANLLILQVSYA). A propeptide spanning residues 19–24 (QKSSEL) is cleaved from the precursor. A Peptidase S1 domain is found at 25–248 (VVGGDECDIN…YLPWIQSIIA (224 aa)). 6 cysteine pairs are disulfide-bonded: cysteine 31–cysteine 162, cysteine 49–cysteine 65, cysteine 97–cysteine 255, cysteine 141–cysteine 209, cysteine 173–cysteine 188, and cysteine 199–cysteine 224. Histidine 64 (charge relay system) is an active-site residue. Residue asparagine 101 is glycosylated (N-linked (GlcNAc...) asparagine). Catalysis depends on aspartate 109, which acts as the Charge relay system. N-linked (GlcNAc...) asparagine glycans are attached at residues asparagine 121, asparagine 153, and asparagine 169. Catalysis depends on serine 203, which acts as the Charge relay system. N-linked (GlcNAc...) asparagine glycosylation is found at asparagine 210 and asparagine 250.

This sequence belongs to the peptidase S1 family. Snake venom subfamily. As to quaternary structure, monomer. Expressed by the venom gland.

The protein resides in the secreted. In terms of biological role, snake venom serine protease that may act in the hemostasis system of the prey. This Bothrops insularis (Golden lancehead) protein is Snake venom serine protease BITS01A.